The primary structure comprises 339 residues: DNA repair protein RAD51 homolog 1 (339 aa).

Residues 1-22 (MAMQMQLEASADTSVEEESFGP) form a disordered region. N-acetylalanine is present on Ala2. Position 13 is a phosphothreonine (Thr13). Residue Ser14 is modified to Phosphoserine. The 30-residue stretch at 48–77 (TVEAVAYAPKKELINIKGISEAKADKILTE) folds into the HhH domain. Residue Tyr54 is modified to Phosphotyrosine; by ABL1. Residues Lys58 and Lys64 each participate in a glycyl lysine isopeptide (Lys-Gly) (interchain with G-Cter in ubiquitin) cross-link. 127–134 (GEFRTGKT) provides a ligand contact to ATP. The segment at 184–257 (DVLDNVAYAR…FLRMLLRLAD (74 aa)) is interaction with PALB2. A Nuclear export signal; masked by the interaction with BRCA2 motif is present at residues 245 to 260 (LARFLRMLLRLADEFG). Thr309 is subject to Phosphothreonine; by CHEK1.

This sequence belongs to the RecA family. RAD51 subfamily. In terms of assembly, forms linear homooligomers, giving rise to a RAD51 nucleoprotein filament, which is essential for strand-pairing reactions during DNA recombination. Interacts with BRCA1 and either directly or indirectly with p53. Interacts with XRCC3, RAD54L and RAD54B. Interacts with the BCDX2 subcomplex RAD51C:RAD51B. Component of the homologous recombination repair (HR) complex composed of ERCC5/XPG, BRCA2, PALB2, DSS1 and RAD51. Interacts directly with PALB2 which may serve as a scaffold for a HR complex containing PALB2, BRCA2, RAD51C, RAD51 and XRCC3. Interacts with RAD51AP1 and RAD51AP2. Interacts with CHEK1, and this may require prior phosphorylation of CHEK1. Interacts with the MND1-PSMC3IP heterodimer. Found in a complex, at least composed of BLM, RAD51 and SPIDR; the complex formation is mediated by SPIDR. Interacts with SPIDR; the interaction is direct and recruits RAD51 to DNA damage sites. Interacts with FIGNL1 (via N-terminal one-half region); the interaction is direct. Interacts with RAD51AP1 (via C-terminal region); the interaction is direct. Interacts with NABP2, RPA1, PALB2 and RAD51. Interacts with SWI5/C9orf119, and at lower level with SFR1/MEIR5. Interacts with hyperphosphorylated RPA2; this interaction is necessary for efficient recruitment to chromatin in response to DNA damage. Interacts with SWSAP1; involved in homologous recombination repair. Interacts with PARPBP, BRCA2 and RECQL5; these interactions interfere with the formation of the RAD51-DNA homologous recombination structure. Interacts with POLQ; POLQ acts as an inhibitor of homology-recombination repair (HR) pathway by limiting RAD51 accumulation at resected ends. Interacts with POLN. Interacts with FBH1. Interacts with RFWD3. Interacts with the MCM8-MCM9 complex; the interaction recruits RAD51 to DNA damage sites. Component of a multiprotein complex with MEIOB and SPATA22. Interacts with the complex BRME1:HSF2BP:BRCA2. Interacts with HELQ; stimulating HELQ DNA helicase activity and ability to unwing DNA. Interacts with MMS22L; the interaction is direct and promotes recruitment of RAD51 to sites of DNA damage. Interacts with the ATAD5 RFC-like complex. Within the ATAD5 RFC-like complex, interacts with ATAD5 (via N-terminus); the interaction is direct and enhanced under replication stress. Interacts with WDR48; the interaction is enhanced under replication stress. Interacts with DNA helicase ZGRF1; the interaction promotes RAD51 strand exchange activity. Interacts (when phosphorylated) with TOPBP1; interaction takes place following phosphorylation by CK2 and PLK1 and promotes recruitment to DNA damage sites. Interacts with GRB2; this interaction inhibits RAD51 ATPase activity to stabilize RAD51 on stalled replication forks. Post-translationally, ubiquitinated by the SCF(FBH1) E3 ubiquitin ligase complex, regulating RAD51 subcellular location and preventing its association with DNA. Ubiquitinated by RFWD3 in response to DNA damage: ubiquitination leads to degradation by the proteasome, promoting homologous recombination. Phosphorylation of Thr-309 by CHEK1 may enhance association with chromatin at sites of DNA damage and promote DNA repair by homologous recombination. Phosphorylated at Ser-14 by PLK1, triggering phosphorylation at Thr-13 by CK2, thereby promoting interaction with TOPBP1 and recruitment to DNA damage sites during S-phase. Phosphorylation by ABL1 inhibits function. As to expression, expressed in the testes (at protein level). Expressed in the brain (at protein level). Expressed in the thymus, spleen, ovary and small intestine.

The protein localises to the nucleus. The protein resides in the cytoplasm. It is found in the perinuclear region. It localises to the mitochondrion matrix. Its subcellular location is the chromosome. The protein localises to the cytoskeleton. The protein resides in the microtubule organizing center. It is found in the centrosome. In terms of biological role, plays an important role in homologous strand exchange, a key step in DNA repair through homologous recombination (HR). Binds to single-stranded DNA in an ATP-dependent manner to form nucleoprotein filaments which are essential for the homology search and strand exchange. Catalyzes the recognition of homology and strand exchange between homologous DNA partners to form a joint molecule between a processed DNA break and the repair template. Recruited to resolve stalled replication forks during replication stress. Part of a PALB2-scaffolded HR complex containing BRCA2 and RAD51C and which is thought to play a role in DNA repair by HR. Plays a role in regulating mitochondrial DNA copy number under conditions of oxidative stress in the presence of RAD51C and XRCC3. Also involved in interstrand cross-link repair. The chain is DNA repair protein RAD51 homolog 1 from Mus musculus (Mouse).